The chain runs to 571 residues: OTU domain-containing protein 5 (571 aa).

Disordered regions lie at residues Met1–Gly111 and Pro146–Tyr175. Positions Pro11–Pro30 are enriched in pro residues. The segment covering Arg32–Gly47 has biased composition (gly residues). The segment covering Ala63–Pro75 has biased composition (pro residues). At Ser64 the chain carries Phosphoserine. Residues Ala84–Gln97 are compositionally biased toward low complexity. Ser165 carries the phosphoserine modification. Tyr175 bears the Phosphotyrosine mark. Ser177 carries the post-translational modification Phosphoserine. Phosphothreonine is present on Thr195. The 129-residue stretch at Phe213 to Pro341 folds into the OTU domain. Residues Met218–Cys224 are cys-loop. Asp221 is a catalytic residue. Residue Cys224 is the Nucleophile of the active site. Residues Lys273–Ile283 are variable-loop. Ser328 carries the phosphoserine; by MTOR modification. The segment at Tyr329–His334 is his-loop. His334 is an active-site residue. Phosphoserine is present on residues Ser337 and Ser375. The segment at Ala418–Gly502 is disordered. Composition is skewed to low complexity over residues Ala430–Ser443 and Ser450–Pro462. Phosphoserine is present on Ser452. Thr507 carries the phosphothreonine modification. Ser508 carries the post-translational modification Phosphoserine; by MTOR.

The protein belongs to the peptidase C85 family. As to quaternary structure, interacts with TRAF3. Post-translationally, phosphorylation at Ser-177 is required for deubiquitinating activity. Phosphorylation at Ser-328, Ser-337 and Ser-508 by MTOR promotes its activity. In terms of tissue distribution, expressed in various tissues, including the liver and placenta, as well as in peripheral blood leukocytes.

The protein localises to the nucleus. It carries out the reaction Thiol-dependent hydrolysis of ester, thioester, amide, peptide and isopeptide bonds formed by the C-terminal Gly of ubiquitin (a 76-residue protein attached to proteins as an intracellular targeting signal).. Inhibited by N-ethyl-maleimide (NEM). In terms of biological role, deubiquitinating enzyme that functions as a negative regulator of the innate immune system. Has peptidase activity towards 'Lys-48'- and 'Lys-63'-linked polyubiquitin chains. Can also cleave 'Lys-11'-linked ubiquitin chains (in vitro). Acts via TRAF3 deubiquitination and subsequent suppression of type I interferon (IFN) production. Controls neuroectodermal differentiation through cleaving 'Lys-48'-linked ubiquitin chains to counteract degradation of select chromatin regulators such as ARID1A, HDAC2 and HCF1. Acts as a positive regulator of mTORC1 and mTORC2 signaling following phosphorylation by MTOR: acts by mediating deubiquitination of BTRC, leading to its stability. This Homo sapiens (Human) protein is OTU domain-containing protein 5.